The sequence spans 154 residues: Aspartate carbamoyltransferase regulatory chain (154 aa).

Positions 110, 115, 136, and 139 each coordinate Zn(2+).

The protein belongs to the PyrI family. Contains catalytic and regulatory chains. Zn(2+) serves as cofactor.

Involved in allosteric regulation of aspartate carbamoyltransferase. The polypeptide is Aspartate carbamoyltransferase regulatory chain (Halobacterium salinarum (strain ATCC 700922 / JCM 11081 / NRC-1) (Halobacterium halobium)).